A 219-amino-acid chain; its full sequence is Cytidylate kinase (219 aa).

11 to 19 (GPAGVGKTT) is a binding site for ATP.

Belongs to the cytidylate kinase family. Type 1 subfamily.

The protein resides in the cytoplasm. The catalysed reaction is CMP + ATP = CDP + ADP. The enzyme catalyses dCMP + ATP = dCDP + ADP. In Oleidesulfovibrio alaskensis (strain ATCC BAA-1058 / DSM 17464 / G20) (Desulfovibrio alaskensis), this protein is Cytidylate kinase.